The following is a 295-amino-acid chain: Glutamyl-Q tRNA(Asp) synthetase (295 aa).

L-glutamate is bound by residues 9–13 (RFAPT) and glutamate 45. Residues 12-22 (PTPSGFLHFGS) carry the 'HIGH' region motif. Residues cysteine 101, cysteine 103, tyrosine 115, and cysteine 119 each contribute to the Zn(2+) site. L-glutamate contacts are provided by tyrosine 172 and arginine 190. Positions 228–232 (KLGKS) match the 'KMSKS' region motif. Lysine 231 is a binding site for ATP.

Belongs to the class-I aminoacyl-tRNA synthetase family. GluQ subfamily. Requires Zn(2+) as cofactor.

In terms of biological role, catalyzes the tRNA-independent activation of glutamate in presence of ATP and the subsequent transfer of glutamate onto a tRNA(Asp). Glutamate is transferred on the 2-amino-5-(4,5-dihydroxy-2-cyclopenten-1-yl) moiety of the queuosine in the wobble position of the QUC anticodon. The chain is Glutamyl-Q tRNA(Asp) synthetase from Pseudomonas putida (strain GB-1).